Consider the following 382-residue polypeptide: uncharacterized protein (382 aa).

12 helical membrane-spanning segments follow: residues 14 to 34 (GLLL…LWLA), 45 to 65 (VVSS…GYVI), 79 to 99 (FIFA…SWLA), 102 to 122 (FVAG…LMCS), 131 to 151 (LLAA…LLVS), 157 to 177 (LMSV…PLLF), 204 to 224 (LGVN…GLMP), 235 to 255 (ASIG…QWPI), 270 to 290 (VQVF…AMAP), 291 to 311 (ALFI…AWAC), 325 to 345 (ALLL…AMLM), and 348 to 368 (FSDN…LLML).

It belongs to the major facilitator superfamily. YcaD (TC 2.A.1.26) family.

The protein localises to the cell inner membrane. This is an uncharacterized protein from Escherichia coli (strain K12 / MC4100 / BW2952).